The primary structure comprises 309 residues: Ecto-ADP-ribosyltransferase 5 (309 aa).

Residues 1 to 23 (MILEDLLMVLSCLSLHALWKVRA) form the signal peptide. A disulfide bridge connects residues C43 and C259. A TR mART core domain is found at 63–253 (ALLRESWEAA…IVTLWSYDQT (191 aa)). NAD(+) is bound at residue Y100. N102 carries an N-linked (GlcNAc...) asparagine glycan. Residues R161 and Q181 each contribute to the NAD(+) site. The active site involves R161. S184 is a catalytic residue. N-linked (GlcNAc...) asparagine glycosylation is present at N197. Residue S215 participates in NAD(+) binding. E222 is an active-site residue.

The protein belongs to the Arg-specific ADP-ribosyltransferase family. In terms of tissue distribution, abundantly expressed in testis. Lower levels in cardiac and skeletal muscle.

It localises to the secreted. The protein localises to the membrane. The catalysed reaction is L-arginyl-[protein] + NAD(+) = N(omega)-(ADP-D-ribosyl)-L-arginyl-[protein] + nicotinamide + H(+). This chain is Ecto-ADP-ribosyltransferase 5 (Art5), found in Mus musculus (Mouse).